Reading from the N-terminus, the 237-residue chain is GATA zinc finger domain-containing protein 18 (237 aa).

2 stretches are compositionally biased toward low complexity: residues 1 to 28 and 87 to 118; these read MAHNNNNNINNNNNNNNNNNNNNNKNNN and NTSTNTTTTTTTTTTTTTTSSPNNNVITPNSN. 3 disordered regions span residues 1-31, 78-119, and 140-186; these read MAHNNNNNINNNNNNNNNNNNNNNKNNNSEY, PTNT…NSNL, and FEEG…GGCS. A compositionally biased stretch (acidic residues) spans 140 to 151; sequence FEEGDDEEETSS. A compositionally biased stretch (low complexity) spans 152–167; that stretch reads DSDSSSSSSTSSSSSE. The segment at 185–212 adopts a GATA-type zinc-finger fold; it reads CSICKTQETPYWRKGKDGDKTVYLCNAC.

This chain is GATA zinc finger domain-containing protein 18 (gtaR), found in Dictyostelium discoideum (Social amoeba).